Here is a 293-residue protein sequence, read N- to C-terminus: Ribosomal RNA small subunit methyltransferase A (293 aa).

Residues Asn38, Val40, Gly65, Glu86, Asp116, and Asn135 each contribute to the S-adenosyl-L-methionine site.

It belongs to the class I-like SAM-binding methyltransferase superfamily. rRNA adenine N(6)-methyltransferase family. RsmA subfamily.

Its subcellular location is the cytoplasm. It catalyses the reaction adenosine(1518)/adenosine(1519) in 16S rRNA + 4 S-adenosyl-L-methionine = N(6)-dimethyladenosine(1518)/N(6)-dimethyladenosine(1519) in 16S rRNA + 4 S-adenosyl-L-homocysteine + 4 H(+). Functionally, specifically dimethylates two adjacent adenosines (A1518 and A1519) in the loop of a conserved hairpin near the 3'-end of 16S rRNA in the 30S particle. May play a critical role in biogenesis of 30S subunits. The chain is Ribosomal RNA small subunit methyltransferase A from Nocardia farcinica (strain IFM 10152).